Consider the following 735-residue polypeptide: MRLWTMSLADTTEAHTNEHFPSLALGSNKKSTEGKRSPGAGGQSQNSQASNGSVDYSRSQCSCTSLTSHYDYSEDFLSDCSETAVRRLQSEKPLAKAKEKRKYNAGKLPQPRGQKDIPAEKKQFWNASLISSQIQTIAKRRDTMTHRILSARLHKIKELKNELADVHRKLEASAIENQFLKQLQLRHLKAIGKYVNSQNNLPQITAKHQNEVKNLRQLLRKSQEKERAVSRKLRETDGELLRTKDVLQALQRLSEDKNLAEREELTDRLTDLTAKMEANDKKIQNLEKQLRLNNRSYSRQLAKENRKTLAAQTATKTLQAEVRQLQQKLKEKDRELEIKNIYTNRILKNLNDKEDYPKVSSTKSVQADRKSLPSVNMRHQETQKSDVPFWITKGKRGKGNIAHKEKSTETNHDIPYYVCKLPKQEESKRKYEANLTVLKSMPSPPASWGLVATEQICAFHLECHSCTHTADLSKEVEHRKPQTSLETPRRPKENKEDQEKRAIPAEAEPTAKESEAHKDAEDKALTRAAGNAGDAGDAGDAGNDREVVGEHKVVGAQEVVGAQELPGADEADEVHGAGEAPRDVEPGRGRRKTPRKHYSFTEATENLHHGLPTSCRQVSGSPHCRCRHDMGKHRSEQELRLEPAGYEPSFGKGAGARARARARATAFRDRKSSLMEELFGAGFAGRAGSSDSEAVSKSPQTGPQASAGNAFGDSRATVAGSIQASPTEANRKTVV.

2 disordered regions span residues 12-54 (TEAH…NGSV) and 91-115 (EKPL…RGQK). Over residues 43-53 (QSQNSQASNGS) the composition is skewed to low complexity. Residues 205-335 (TAKHQNEVKN…QQKLKEKDRE (131 aa)) are a coiled coil. Disordered stretches follow at residues 356–379 (YPKV…NMRH), 473–597 (SKEV…PRKH), 632–657 (KHRS…AGAR), and 685–735 (GRAG…KTVV). The span at 487–525 (TPRRPKENKEDQEKRAIPAEAEPTAKESEAHKDAEDKAL) shows a compositional bias: basic and acidic residues. Residues 528–541 (AAGNAGDAGDAGDA) show a composition bias toward low complexity. Composition is skewed to basic and acidic residues over residues 542–553 (GNDREVVGEHKV), 573–588 (EVHG…EPGR), and 632–641 (KHRSEQELRL). Over residues 689–707 (SSDSEAVSKSPQTGPQASA) the composition is skewed to polar residues.

Belongs to the LCA5 family.

In Mus musculus (Mouse), this protein is Lebercilin-like protein.